A 422-amino-acid polypeptide reads, in one-letter code: UDP-N-acetylglucosamine 1-carboxyvinyltransferase (422 aa).

A phosphoenolpyruvate-binding site is contributed by 22–23 (KN). Arginine 93 lines the UDP-N-acetyl-alpha-D-glucosamine pocket. Residue cysteine 117 is the Proton donor of the active site. The residue at position 117 (cysteine 117) is a 2-(S-cysteinyl)pyruvic acid O-phosphothioketal. UDP-N-acetyl-alpha-D-glucosamine contacts are provided by residues 122-126 (RPVDQ), aspartate 305, and isoleucine 327.

It belongs to the EPSP synthase family. MurA subfamily.

It is found in the cytoplasm. It catalyses the reaction phosphoenolpyruvate + UDP-N-acetyl-alpha-D-glucosamine = UDP-N-acetyl-3-O-(1-carboxyvinyl)-alpha-D-glucosamine + phosphate. The protein operates within cell wall biogenesis; peptidoglycan biosynthesis. Functionally, cell wall formation. Adds enolpyruvyl to UDP-N-acetylglucosamine. The sequence is that of UDP-N-acetylglucosamine 1-carboxyvinyltransferase from Bordetella parapertussis (strain 12822 / ATCC BAA-587 / NCTC 13253).